Here is a 353-residue protein sequence, read N- to C-terminus: Ribosome biogenesis protein BRX1 homolog (353 aa).

Positions Met-1–Gly-10 are enriched in basic residues. A disordered region spans residues Met-1–Arg-46. Residues Arg-21 to Ala-36 are compositionally biased toward basic and acidic residues. In terms of domain architecture, Brix spans Glu-60–Gly-249. Residue Lys-160 forms a Glycyl lysine isopeptide (Lys-Gly) (interchain with G-Cter in SUMO2) linkage. Residue Ser-261 is modified to Phosphoserine. At Lys-276 the chain carries N6-acetyllysine. Residues Lys-314 and Lys-322 each participate in a glycyl lysine isopeptide (Lys-Gly) (interchain with G-Cter in SUMO2) cross-link.

Belongs to the BRX1 family.

Its subcellular location is the nucleus. The protein localises to the nucleolus. Required for biogenesis of the 60S ribosomal subunit. This Homo sapiens (Human) protein is Ribosome biogenesis protein BRX1 homolog (BRIX1).